A 129-amino-acid polypeptide reads, in one-letter code: Replication initiation control protein YabA (129 aa).

Residues His103, Cys105, Cys119, and Cys122 each contribute to the Zn(2+) site.

It belongs to the YabA family. Homotetramer. Interacts with both DnaA and DnaN, acting as a bridge between these two proteins. Zn(2+) is required as a cofactor.

The protein resides in the cytoplasm. Its subcellular location is the nucleoid. Functionally, involved in control of chromosome replication initiation. Inhibits the cooperative binding of DnaA to the oriC region, thus negatively regulating initiation of chromosome replication. Inhibits the ability of DnaA-ATP to form a helix on DNA; does not disassemble preformed DnaA-DNA helices. Decreases the residence time of DnaA on the chromosome at its binding sites (oriC, replication forks and promoter-binding sites). Tethers DnaA to the replication machinery via the DNA polymerase beta sliding clamp subunit (dnaN). Associates with oriC and other DnaA targets on the chromosome in a DnaA-dependent manner. This Listeria welshimeri serovar 6b (strain ATCC 35897 / DSM 20650 / CCUG 15529 / CIP 8149 / NCTC 11857 / SLCC 5334 / V8) protein is Replication initiation control protein YabA.